The sequence spans 145 residues: MTVHNLYLFDRNGVCLHYSEWHRKKQAGIPKEEEYKLMYGMLFSIRSFVSKMSPLDMKDGFLAFQTSRYKLHYYETPTGIKVVMNTDLGVGPIRDVLHHIYSALYVELVVKNPLCPLGQTVQSELFRSRLDSYVRSLPFFSARAG.

Belongs to the TRAPP small subunits family. BET5 subfamily. In terms of assembly, part of the multisubunit transport protein particle (TRAPP) complex. The heterodimer TRAPPC6B-TRAPPC3 interacts with TRAPPC1 likely providing a core for TRAPP complex formation.

The protein resides in the golgi apparatus. The protein localises to the cis-Golgi network. It is found in the endoplasmic reticulum. Its function is as follows. May play a role in vesicular transport from endoplasmic reticulum to Golgi. The polypeptide is Trafficking protein particle complex subunit 1 (TRAPPC1) (Bos taurus (Bovine)).